A 451-amino-acid polypeptide reads, in one-letter code: SH2 domain-containing protein 7 (451 aa).

Residues 51–142 (WFHGFITRKQ…PFKEMLTAAC (92 aa)) enclose the SH2 domain. 3 disordered regions span residues 180–232 (KAAS…SLLE), 256–321 (LGTE…SDAM), and 408–436 (GTPELSEPGNTYEQIPATKSKETGRTHKP). The span at 221–232 (SPLPEKSSSLLE) shows a compositional bias: low complexity. Residues 279-291 (EAQRRLSDGEQNR) are compositionally biased toward basic and acidic residues. Over residues 306–316 (QGPTESPTSWG) the composition is skewed to polar residues. Basic and acidic residues predominate over residues 426-436 (KSKETGRTHKP).

In Homo sapiens (Human), this protein is SH2 domain-containing protein 7 (SH2D7).